We begin with the raw amino-acid sequence, 343 residues long: Ribosomal RNA small subunit methyltransferase H (343 aa).

Residues 39–41 (AGH), Asp58, Phe87, Asp108, and Gln115 each bind S-adenosyl-L-methionine.

This sequence belongs to the methyltransferase superfamily. RsmH family.

The protein localises to the cytoplasm. It catalyses the reaction cytidine(1402) in 16S rRNA + S-adenosyl-L-methionine = N(4)-methylcytidine(1402) in 16S rRNA + S-adenosyl-L-homocysteine + H(+). Specifically methylates the N4 position of cytidine in position 1402 (C1402) of 16S rRNA. The sequence is that of Ribosomal RNA small subunit methyltransferase H from Bifidobacterium adolescentis (strain ATCC 15703 / DSM 20083 / NCTC 11814 / E194a).